The sequence spans 192 residues: Protein GrpE (192 aa).

Residues 1 to 34 (MSSKEQKTPNEQVSEEMENTAEQQVEATQETGEC) are disordered. The segment covering 20-31 (TAEQQVEATQET) has biased composition (polar residues).

The protein belongs to the GrpE family. Homodimer.

It is found in the cytoplasm. Functionally, participates actively in the response to hyperosmotic and heat shock by preventing the aggregation of stress-denatured proteins, in association with DnaK and GrpE. It is the nucleotide exchange factor for DnaK and may function as a thermosensor. Unfolded proteins bind initially to DnaJ; upon interaction with the DnaJ-bound protein, DnaK hydrolyzes its bound ATP, resulting in the formation of a stable complex. GrpE releases ADP from DnaK; ATP binding to DnaK triggers the release of the substrate protein, thus completing the reaction cycle. Several rounds of ATP-dependent interactions between DnaJ, DnaK and GrpE are required for fully efficient folding. The protein is Protein GrpE of Yersinia pestis.